The chain runs to 185 residues: Anaphase-promoting complex subunit 10 (185 aa).

Thr2 bears the N-acetylthreonine mark. In terms of domain architecture, DOC spans 2–185; it reads TTPNKTPPGA…IDFMMYRSIR (184 aa). Residue Lys169 is modified to N6-acetyllysine.

Belongs to the APC10 family. In terms of assembly, the mammalian APC/C is composed at least of 14 distinct subunits ANAPC1, ANAPC2, CDC27/APC3, ANAPC4, ANAPC5, CDC16/APC6, ANAPC7, CDC23/APC8, ANAPC10, ANAPC11, CDC26/APC12, ANAPC13, ANAPC15 and ANAPC16 that assemble into a complex of at least 19 chains with a combined molecular mass of around 1.2 MDa; APC/C interacts with FZR1 and FBXO5. The C-terminus of APC10 binds to CDC27/APC3. Interacts with PIWIL1; interaction only takes place when PIWIL1 binds piRNA. Interacts with FBXO43; the interaction is direct.

The protein operates within protein modification; protein ubiquitination. Its function is as follows. Component of the anaphase promoting complex/cyclosome (APC/C), a cell cycle-regulated E3 ubiquitin ligase that controls progression through mitosis and the G1 phase of the cell cycle. The APC/C complex acts by mediating ubiquitination and subsequent degradation of target proteins: it mainly mediates the formation of 'Lys-11'-linked polyubiquitin chains and, to a lower extent, the formation of 'Lys-48'- and 'Lys-63'-linked polyubiquitin chains. The APC/C complex catalyzes assembly of branched 'Lys-11'-/'Lys-48'-linked branched ubiquitin chains on target proteins. This is Anaphase-promoting complex subunit 10 (ANAPC10) from Bos taurus (Bovine).